A 338-amino-acid polypeptide reads, in one-letter code: MTTTLVSATIFDLSEVLCKGNKMLNYSTPSAGGCLLDRKAVGTPAGGGFPRRHSVTLPSSKFHQNQLLSSLKGEPAPTLSSRDSRFRDRSFSEGGERLLPTQKQPGSGQVNSSRYKTELCRPFEENGACKYGDKCQFAHGIHELRSLTRHPKYKTELCRTFHTIGFCPYGPRCHFIHNAEERRALAGGRDLSADRPRLQHSFSFAGFPSAAATAAATGLLDSPTSITPPPILSADDLLGSPTLPDGTNNPFAFSSQELASLFAPSMGLPGGGSPTTFLFRPMSESPHMFDSPPSPQDSLSDHEGYLSSSSSSHSGSDSPTLDNSRRLPIFSRLSISDD.

The segment at 1–111 (MTTTLVSATI…QKQPGSGQVN (111 aa)) is necessary and sufficient for the association with mRNA decay enzymes and mRNA decay activation. Position 54 is a phosphoserine; by MAPKAPK2 (serine 54). Serine 90 carries the post-translational modification Phosphoserine; by PKB/AKT1. Serine 92 is subject to Phosphoserine; by PKB/AKT1 and MAPKAPK2. The tract at residues 93–113 (EGGERLLPTQKQPGSGQVNSS) is disordered. Polar residues predominate over residues 101–113 (TQKQPGSGQVNSS). 2 C3H1-type zinc fingers span residues 114-142 (RYKT…HGIH) and 152-180 (KYKT…HNAE). A necessary for mRNA decay activation region spans residues 185 to 338 (LAGGRDLSAD…IFSRLSISDD (154 aa)). At serine 203 the chain carries Phosphoserine; by PKB/AKT1 and MAPKAPK2. Positions 273 to 338 (SPTTFLFRPM…IFSRLSISDD (66 aa)) are disordered. Over residues 305-318 (YLSSSSSSHSGSDS) the composition is skewed to low complexity. Serine 318 is subject to Phosphoserine. Phosphoserine; by RPS6KA1 is present on serine 334.

Associates with the cytoplasmic CCR4-NOT deadenylase and RNA exosome complexes to trigger ARE-containing mRNA deadenylation and decay processes. Interacts with CNOT1. Interacts (via N-terminus) with CNOT6. Interacts with CNOT7; this interaction is inhibited in response to phorbol 12-myristate 13-acetate (PMA) treatment in a p38 MAPK-dependent manner. Interacts with DCP1A. Interacts (via N-terminus) with DCP2. Interacts (via N-terminus) with EXOSC2. Interacts with XRN1. Interacts (via phosphorylated form) with YWHAB; this interaction occurs in a protein kinase AKT1-dependent manner. Interacts (via phosphorylated form) with YWHAZ; this interaction occurs in a p38 MAPK- and AKT-signaling pathways. Post-translationally, phosphorylated. Phosphorylated by RPS6KA1 at Ser-334 upon phorbol 12-myristate 13-acetate (PMA) treatment; this phosphorylation results in dissociation of the CCR4-NOT deadenylase complex and induces p38 MAPK-mediated stabilization of the low-density lipoprotein receptor LDLR mRNA. Phosphorylated by protein kinase AKT1 at Ser-92 and Ser-203 in response to insulin; these phosphorylations stabilize ZFP36L1, increase the association with 14-3-3 proteins and mediate ARE-containing mRNA stabilization. AKT1-mediated phosphorylation at Ser-92 does not impair ARE-containing RNA-binding. Phosphorylated at Ser-54, Ser-92 and Ser-203 by MAPKAPK2; these phosphorylations increase the association with 14-3-3 proteins and mediate ARE-containing mRNA stabilization in a protein kinase AKT1-independent manner. MAPKAPK2-mediated phosphorylations at Ser-54, Ser-92 and Ser-203 do not impair ARE-containing RNA-binding. Phosphorylations increase the association with 14-3-3 proteins and mediate ARE-containing mRNA stabilization during early adipogenesis in a p38 MAPK- and AKT-dependent manner. Phosphorylated by protein kinase AKT1 at Ser-92. Ubiquitinated. Ubiquitination leads to proteasomal degradation, a process inhibited by phosphorylations at Ser-90, Ser-92 and Ser-203.

Its subcellular location is the nucleus. The protein localises to the cytoplasm. It localises to the cytoplasmic granule. It is found in the P-body. Its function is as follows. Zinc-finger RNA-binding protein that destabilizes several cytoplasmic AU-rich element (ARE)-containing mRNA transcripts by promoting their poly(A) tail removal or deadenylation, and hence provide a mechanism for attenuating protein synthesis. Acts as a 3'-untranslated region (UTR) ARE mRNA-binding adapter protein to communicate signaling events to the mRNA decay machinery. Functions by recruiting the CCR4-NOT deadenylase complex and components of the cytoplasmic RNA decay machinery to the bound ARE-containing mRNAs, and hence promotes ARE-mediated mRNA deadenylation and decay processes. Also induces the degradation of ARE-containing mRNAs even in absence of poly(A) tail. Binds to 3'-UTR ARE of numerous mRNAs. Positively regulates early adipogenesis by promoting ARE-mediated mRNA decay of immediate early genes (IEGs). Promotes ARE-mediated mRNA decay of mineralocorticoid receptor NR3C2 mRNA in response to hypertonic stress. Negatively regulates hematopoietic/erythroid cell differentiation by promoting ARE-mediated mRNA decay of the transcription factor STAT5B mRNA. Positively regulates monocyte/macrophage cell differentiation by promoting ARE-mediated mRNA decay of the cyclin-dependent kinase CDK6 mRNA. Promotes degradation of ARE-containing pluripotency-associated mRNAs in embryonic stem cells (ESCs), such as NANOG, through a fibroblast growth factor (FGF)-induced MAPK-dependent signaling pathway, and hence attenuates ESC self-renewal and positively regulates mesendoderm differentiation. May play a role in mediating pro-apoptotic effects in malignant B-cells by promoting ARE-mediated mRNA decay of BCL2 mRNA. In association with ZFP36L2 maintains quiescence on developing B lymphocytes by promoting ARE-mediated decay of several mRNAs encoding cell cycle regulators that help B cells progress through the cell cycle, and hence ensuring accurate variable-diversity-joining (VDJ) recombination and functional immune cell formation. Together with ZFP36L2 is also necessary for thymocyte development and prevention of T-cell acute lymphoblastic leukemia (T-ALL) transformation by promoting ARE-mediated mRNA decay of the oncogenic transcription factor NOTCH1 mRNA. Participates in the delivery of target ARE-mRNAs to processing bodies (PBs). In addition to its cytosolic mRNA-decay function, plays a role in the regulation of nuclear mRNA 3'-end processing; modulates mRNA 3'-end maturation efficiency of the DLL4 mRNA through binding with an ARE embedded in a weak noncanonical polyadenylation (poly(A)) signal in endothelial cells. Also involved in the regulation of stress granule (SG) and P-body (PB) formation and fusion. Plays a role in vasculogenesis and endocardial development. Plays a role in the regulation of keratinocyte proliferation, differentiation and apoptosis. Plays a role in myoblast cell differentiation. The chain is mRNA decay activator protein ZFP36L1 from Rattus norvegicus (Rat).